The sequence spans 330 residues: Probable xanthine dehydrogenase subunit A (330 aa).

In terms of assembly, could be composed of four subunits: PucA, PucC, PucD and PucE.

It carries out the reaction xanthine + NAD(+) + H2O = urate + NADH + H(+). The catalysed reaction is hypoxanthine + NAD(+) + H2O = xanthine + NADH + H(+). It participates in purine metabolism; hypoxanthine degradation; urate from hypoxanthine: step 1/2. Its pathway is purine metabolism; hypoxanthine degradation; urate from hypoxanthine: step 2/2. Functionally, oxidizes hypoxanthine and xanthine to uric acid. PucA subunit could exert a molybdenum cofactor recruiting function. This is Probable xanthine dehydrogenase subunit A (pucA) from Bacillus subtilis (strain 168).